Here is a 465-residue protein sequence, read N- to C-terminus: Monocarboxylate transporter 4 (465 aa).

At 2 to 17 the chain is on the cytoplasmic side; the sequence is GGAVVDEGPTGVKAPD. A helical transmembrane segment spans residues 18-38; it reads GGWGWAVLFGCFVITGFSYAF. The Extracellular portion of the chain corresponds to 39 to 61; it reads PKAVSVFFKELIQEFGIGYSDTA. A helical transmembrane segment spans residues 62 to 82; the sequence is WISSILLAMLYGTGPLCSVCV. The Cytoplasmic portion of the chain corresponds to 83-84; sequence NR. A helical membrane pass occupies residues 85-105; it reads FGCRPVMLVGGLFASLGMVAA. Over 106–109 the chain is Extracellular; it reads SFCR. The chain crosses the membrane as a helical span at residues 110 to 130; sequence SIIQVYLTTGVITGLGLALNF. The Cytoplasmic segment spans residues 131–149; sequence QPSLIMLNRYFSKRRPMAN. The chain crosses the membrane as a helical span at residues 150–170; sequence GLAAAGSPVFLCALSPLGQLL. Topologically, residues 171-179 are extracellular; that stretch reads QDRYGWRGG. The chain crosses the membrane as a helical span at residues 180–200; the sequence is FLILGGLLLNCCVCAALMRPL. The Cytoplasmic portion of the chain corresponds to 201–227; sequence VVTAQPGSGPPRPSRRLLDLSVFRDRG. A helical membrane pass occupies residues 228-248; the sequence is FVLYAVAASVMVLGLFVPPVF. Residues 249–264 are Extracellular-facing; it reads VVSYAKDLGVPDTKAA. A helical transmembrane segment spans residues 265–285; it reads FLLTILGFIDIFARPAAGFVA. Topologically, residues 286–294 are cytoplasmic; sequence GLGKVRPYS. The chain crosses the membrane as a helical span at residues 295–315; it reads VYLFSFSMFFNGLADLAGSTA. The Extracellular portion of the chain corresponds to 316–317; sequence GD. A helical transmembrane segment spans residues 318–338; that stretch reads YGGLVVFCIFFGISYGMVGAL. The Cytoplasmic segment spans residues 339–351; the sequence is QFEVLMAIVGTHK. The helical transmembrane segment at 352 to 372 threads the bilayer; that stretch reads FSSAIGLVLLMEAVAVLVGPP. The Extracellular portion of the chain corresponds to 373–384; that stretch reads SGGKLLDATHVY. Residues 385–405 form a helical membrane-spanning segment; the sequence is MYVFILAGAEVLTSSLILLLG. The Cytoplasmic portion of the chain corresponds to 406-465; sequence NFFCIRKKPKEPQPEVAAAEEEKLHKPPADSGVDLREVEHFLKAEPEKNGEVVHTPETSV. A disordered region spans residues 419–438; sequence PEVAAAEEEKLHKPPADSGV. Basolateral sorting signal stretches follow at residues 423–441 and 441–465; these read AAEEEKLHKPPADSGVDLR and REVEHFLKAEPEKNGEVVHTPETSV. The segment covering 425-438 has biased composition (basic and acidic residues); that stretch reads EEEKLHKPPADSGV. Position 436 is a phosphoserine (Ser-436). The residue at position 460 (Thr-460) is a Phosphothreonine. A Phosphoserine modification is found at Ser-464.

It belongs to the major facilitator superfamily. Monocarboxylate porter (TC 2.A.1.13) family. As to quaternary structure, interacts with BSG; interaction mediates SLC16A3 targeting to the plasma membrane. As to expression, highly expressed in skeletal muscle.

Its subcellular location is the cell membrane. The protein resides in the basolateral cell membrane. The enzyme catalyses (S)-lactate(in) + H(+)(in) = (S)-lactate(out) + H(+)(out). It catalyses the reaction pyruvate(out) + H(+)(out) = pyruvate(in) + H(+)(in). Functionally, proton-dependent transporter of monocarboxylates such as L-lactate and pyruvate. Plays a predominant role in L-lactate efflux from highly glycolytic cells. This chain is Monocarboxylate transporter 4 (SLC16A3), found in Homo sapiens (Human).